The chain runs to 116 residues: QAPSDKVIPIISQNEVRNPDGSYQWNYETGNGIKADETGTLKKGSKPDEGDFIVAQGSFSYTGPDGTAYQVQYSADDENGFVPQGAHFPTPPPIPPAIQRALDYLATLPPTPEARP.

At Gln1 the chain carries Pyrrolidone carboxylic acid. Residues 20 to 92 (DGSYQWNYET…PQGAHFPTPP (73 aa)) form the Chitin-binding type R&amp;R domain. The tract at residues 78–97 (ENGFVPQGAHFPTPPPIPPA) is disordered. The O-linked (GalNAc) threonine; in ADB-4A, ABD-4B and ABD-4C glycan is linked to Thr90. Residue Thr107 is glycosylated (O-linked (GalNAc) threonine; in ADB-4A and ABD-4B). The O-linked (GalNAc) threonine; in ADB-4A glycan is linked to Thr111. Pro116 is modified (proline amide).

3 variants exists that arise from a sequential glycosylation with N-acetylgalactosamine at three (ABD-4A), two (ABD-4B) or one (ABD-4C) threonine residues.

Component of the soft endocuticle of migratory locust. The polypeptide is Endocuticle structural glycoprotein ABD-4 (Locusta migratoria (Migratory locust)).